The chain runs to 434 residues: 3-phosphoshikimate 1-carboxyvinyltransferase (434 aa).

3-phosphoshikimate-binding residues include K22, S23, and R27. K22 provides a ligand contact to phosphoenolpyruvate. The phosphoenolpyruvate site is built by G93 and R121. Positions 168, 169, 170, 199, 320, and 347 each coordinate 3-phosphoshikimate. Phosphoenolpyruvate is bound at residue Q170. The active-site Proton acceptor is D320. Residues R351, R394, and K419 each coordinate phosphoenolpyruvate.

The protein belongs to the EPSP synthase family. As to quaternary structure, monomer.

It localises to the cytoplasm. It catalyses the reaction 3-phosphoshikimate + phosphoenolpyruvate = 5-O-(1-carboxyvinyl)-3-phosphoshikimate + phosphate. The protein operates within metabolic intermediate biosynthesis; chorismate biosynthesis; chorismate from D-erythrose 4-phosphate and phosphoenolpyruvate: step 6/7. Its function is as follows. Catalyzes the transfer of the enolpyruvyl moiety of phosphoenolpyruvate (PEP) to the 5-hydroxyl of shikimate-3-phosphate (S3P) to produce enolpyruvyl shikimate-3-phosphate and inorganic phosphate. This Burkholderia cenocepacia (strain ATCC BAA-245 / DSM 16553 / LMG 16656 / NCTC 13227 / J2315 / CF5610) (Burkholderia cepacia (strain J2315)) protein is 3-phosphoshikimate 1-carboxyvinyltransferase.